An 803-amino-acid polypeptide reads, in one-letter code: Homeobox protein Wariai (803 aa).

Polar residues predominate over residues 23–41 (SDYDSYEQQYNNPTGSKQY). The interval 23–144 (SDYDSYEQQY…PTPYSSNSFS (122 aa)) is disordered. Low complexity predominate over residues 42 to 124 (NNNNNNNTNT…NNNNNNNNNN (83 aa)). Polar residues predominate over residues 125–138 (QHLSQSQQLSPTPY). Residues 162 to 221 (SKKKRKRTSPDQLKLLEKIFMAHQHPNLNLRSQLAVELHMTARSVQIWFQNRRAKARNME) constitute a DNA-binding region (homeobox). A disordered region spans residues 288–330 (INGNMGGGGGGGGGSHNHHHHNHNHNHHNHNHNHNHNQPLSNG). The span at 291 to 302 (NMGGGGGGGGGS) shows a compositional bias: gly residues. Basic residues predominate over residues 303–322 (HNHHHHNHNHNHHNHNHNHN). ANK repeat units follow at residues 374 to 403 (KGLS…NPNI), 407 to 436 (QGNT…DPNL), 440 to 469 (EGVS…EVSV), 474 to 503 (NGET…KASV), 507 to 536 (NNRT…DMNA), 540 to 569 (DGHT…DPNI), 573 to 602 (EGYT…KLNI), 606 to 636 (NGQN…EIAA), and 642 to 671 (QGYT…SKKI). The segment at 695–760 (KSSNNNNSNS…PPGNKFEEDD (66 aa)) is disordered. Positions 696–746 (SSNNNNSNSNINNINNINNINNINSQPNTNSDNNNNNNNNNFNENYSNGNN) are enriched in low complexity.

Its subcellular location is the nucleus. Its function is as follows. Putative transcription factor, that seems to be involved in anterior-posterior patterning of the slug, probably by controlling the proportions of prestalk and prespore cells. This chain is Homeobox protein Wariai (warA), found in Dictyostelium discoideum (Social amoeba).